A 336-amino-acid polypeptide reads, in one-letter code: Carbamoyl dehydratase HypE (336 aa).

At Cys336 the chain carries S-carbamoylcysteine; by HypF; alternate. Cys336 carries the post-translational modification S-cyanocysteine; by autocatalysis; alternate.

Belongs to the HypE family. Homodimer. Forms a complex with HypF. Also forms a complex with HypC, or HybG, and HypD. Modified by HypF, which adds a carboxamido group to the thiolate of the C-terminal cysteine, yielding a protein-S-carboxamide. The carboxamido group is then dehydrated by HypE itself to yield a protein-thiocyanate.

The enzyme catalyses C-terminal S-carboxamide-L-cysteinyl-[HypE protein] + ATP = C-terminal S-cyanate-L-cysteinyl-[HypE protein] + ADP + phosphate + H(+). The protein operates within protein modification; [NiFe] hydrogenase maturation. Its function is as follows. Involved in the maturation of [NiFe] hydrogenases. Along with HypF, it catalyzes the synthesis of the CN ligands of the active site iron of [NiFe]-hydrogenases. HypE catalyzes the ATP-dependent dehydration of the carboxamido group attached to its C-terminal cysteine to a cyano group. The cyano group is then transferred from HypE to the HypC-HypD complex or the HybG-HypD complex. This Escherichia coli (strain K12) protein is Carbamoyl dehydratase HypE.